We begin with the raw amino-acid sequence, 239 residues long: Fatty acid metabolism regulator protein (239 aa).

An HTH gntR-type domain is found at 6-74; that stretch reads QSPAGFAEEY…HGKPTKVNNF (69 aa). Residues 34-53 constitute a DNA-binding region (H-T-H motif); sequence ERELSELIGVTRTTLREVLQ.

Homodimer.

It is found in the cytoplasm. Functionally, multifunctional regulator of fatty acid metabolism. This Shigella flexneri protein is Fatty acid metabolism regulator protein.